We begin with the raw amino-acid sequence, 369 residues long: tRNA-specific 2-thiouridylase MnmA (369 aa).

ATP-binding positions include 16–23 (AMSGGVDS) and Met42. The Nucleophile role is filled by Cys110. A disulfide bridge connects residues Cys110 and Cys206. Gly134 provides a ligand contact to ATP. Residues 156-158 (KDQ) form an interaction with tRNA region. Cys206 acts as the Cysteine persulfide intermediate in catalysis.

The protein belongs to the MnmA/TRMU family.

The protein localises to the cytoplasm. It carries out the reaction S-sulfanyl-L-cysteinyl-[protein] + uridine(34) in tRNA + AH2 + ATP = 2-thiouridine(34) in tRNA + L-cysteinyl-[protein] + A + AMP + diphosphate + H(+). Its function is as follows. Catalyzes the 2-thiolation of uridine at the wobble position (U34) of tRNA, leading to the formation of s(2)U34. In Orientia tsutsugamushi (strain Boryong) (Rickettsia tsutsugamushi), this protein is tRNA-specific 2-thiouridylase MnmA.